A 234-amino-acid polypeptide reads, in one-letter code: tRNA1(Val) (adenine(37)-N6)-methyltransferase (234 aa).

It belongs to the methyltransferase superfamily. tRNA (adenine-N(6)-)-methyltransferase family.

It is found in the cytoplasm. It catalyses the reaction adenosine(37) in tRNA1(Val) + S-adenosyl-L-methionine = N(6)-methyladenosine(37) in tRNA1(Val) + S-adenosyl-L-homocysteine + H(+). Functionally, specifically methylates the adenine in position 37 of tRNA(1)(Val) (anticodon cmo5UAC). This chain is tRNA1(Val) (adenine(37)-N6)-methyltransferase, found in Aliivibrio fischeri (strain ATCC 700601 / ES114) (Vibrio fischeri).